A 288-amino-acid polypeptide reads, in one-letter code: Diaminopimelate epimerase (288 aa).

Residues Asn14 and Asn67 each contribute to the substrate site. The active-site Proton donor is the Cys76. Residues 77 to 78, Asn166, Asn199, and 217 to 218 each bind substrate; these read GN and ER. Cys226 serves as the catalytic Proton acceptor. A substrate-binding site is contributed by 227–228; it reads GT.

It belongs to the diaminopimelate epimerase family. Homodimer.

It is found in the cytoplasm. The catalysed reaction is (2S,6S)-2,6-diaminopimelate = meso-2,6-diaminopimelate. It functions in the pathway amino-acid biosynthesis; L-lysine biosynthesis via DAP pathway; DL-2,6-diaminopimelate from LL-2,6-diaminopimelate: step 1/1. Its function is as follows. Catalyzes the stereoinversion of LL-2,6-diaminopimelate (L,L-DAP) to meso-diaminopimelate (meso-DAP), a precursor of L-lysine and an essential component of the bacterial peptidoglycan. This chain is Diaminopimelate epimerase, found in Bacillus cereus (strain ATCC 14579 / DSM 31 / CCUG 7414 / JCM 2152 / NBRC 15305 / NCIMB 9373 / NCTC 2599 / NRRL B-3711).